We begin with the raw amino-acid sequence, 243 residues long: MKEYIRPFLNQKNISENSKIAYSYDLEQFIEEVHDRITETNLRIYQASIKDFKAAVQKRKLSAVNQFLYFLYQQQLIEEFHRLVLPKVSVSKEQENELLDLSAFWQESSVPRGRLMALLILEMGLLPSEILQVRVADVNLDFQVLKIEKAGQKRVIKIPESLTSELEDYLTGTYLFEKNGKSYSRQWGFRQLEAFLIEQGQASLSAQSLREQFILRQREKGIGLYDIAQDLGLKTMITLEKYR.

The Core-binding (CB) domain occupies 1–72 (MKEYIRPFLN…AVNQFLYFLY (72 aa)). The 159-residue stretch at 85–243 (LPKVSVSKEQ…KTMITLEKYR (159 aa)) folds into the Tyr recombinase domain. Residues lysine 149 and arginine 210 contribute to the active site. Tyrosine 242 acts as the O-(3'-phospho-DNA)-tyrosine intermediate in catalysis.

It belongs to the 'phage' integrase family. XerD-like subfamily.

It is found in the cytoplasm. Its function is as follows. Putative tyrosine recombinase. Not involved in the cutting and rejoining of the recombining DNA molecules on dif(SL) site. This Streptococcus sanguinis (strain SK36) protein is Tyrosine recombinase XerD-like.